The primary structure comprises 97 residues: Large ribosomal subunit protein uL23 (97 aa).

This sequence belongs to the universal ribosomal protein uL23 family. Part of the 50S ribosomal subunit. Contacts protein L29, and trigger factor when it is bound to the ribosome.

One of the early assembly proteins it binds 23S rRNA. One of the proteins that surrounds the polypeptide exit tunnel on the outside of the ribosome. Forms the main docking site for trigger factor binding to the ribosome. This Thermoanaerobacter pseudethanolicus (strain ATCC 33223 / 39E) (Clostridium thermohydrosulfuricum) protein is Large ribosomal subunit protein uL23.